A 544-amino-acid polypeptide reads, in one-letter code: Chaperonin GroEL (544 aa).

Residues 29–32 (TLGP), 86–90 (DGTTT), G413, 476–478 (NAA), and D492 each bind ATP.

This sequence belongs to the chaperonin (HSP60) family. As to quaternary structure, forms a cylinder of 14 subunits composed of two heptameric rings stacked back-to-back. Interacts with the co-chaperonin GroES.

The protein resides in the cytoplasm. It catalyses the reaction ATP + H2O + a folded polypeptide = ADP + phosphate + an unfolded polypeptide.. Functionally, together with its co-chaperonin GroES, plays an essential role in assisting protein folding. The GroEL-GroES system forms a nano-cage that allows encapsulation of the non-native substrate proteins and provides a physical environment optimized to promote and accelerate protein folding. This chain is Chaperonin GroEL, found in Bacillus pumilus (strain SAFR-032).